Here is a 348-residue protein sequence, read N- to C-terminus: Phosphoribosylformylglycinamidine cyclo-ligase (348 aa).

This sequence belongs to the AIR synthase family.

The protein localises to the cytoplasm. It catalyses the reaction 2-formamido-N(1)-(5-O-phospho-beta-D-ribosyl)acetamidine + ATP = 5-amino-1-(5-phospho-beta-D-ribosyl)imidazole + ADP + phosphate + H(+). It participates in purine metabolism; IMP biosynthesis via de novo pathway; 5-amino-1-(5-phospho-D-ribosyl)imidazole from N(2)-formyl-N(1)-(5-phospho-D-ribosyl)glycinamide: step 2/2. The sequence is that of Phosphoribosylformylglycinamidine cyclo-ligase from Aromatoleum aromaticum (strain DSM 19018 / LMG 30748 / EbN1) (Azoarcus sp. (strain EbN1)).